A 1042-amino-acid chain; its full sequence is FHIP family protein AAEL005291 (1042 aa).

Over residues 1 to 14 (MSWLRSSPLRQSFS) the composition is skewed to polar residues. Disordered regions lie at residues 1-31 (MSWLRSSPLRQSFSKAGGGSGSGASSRGGNS), 494-514 (NNTSQASSMLGSGPSSMPQGG), 821-866 (PHSG…KRND), and 905-977 (SNSS…GSPH). Positions 839–859 (VSMTSNLSQTTPMQLTPSSSY) are enriched in polar residues. 2 stretches are compositionally biased toward low complexity: residues 905–940 (SNSSSISHQSSSTPSPAGSQQYLSSNSSGVSSFMGS) and 956–976 (PSIGGPPSSMGPTSLTSTGSP).

It belongs to the FHIP family.

This chain is FHIP family protein AAEL005291, found in Aedes aegypti (Yellowfever mosquito).